A 446-amino-acid polypeptide reads, in one-letter code: Tubulin beta-1 chain (446 aa).

GTP-binding residues include Gln13, Glu71, Ser140, Gly144, Thr145, Gly146, Asn206, and Asn228. Glu71 lines the Mg(2+) pocket. A disordered region spans residues 421–446; sequence VSEYQQYQDASADDGEEYEEDAPMEE. The segment covering 431–446 has biased composition (acidic residues); sequence SADDGEEYEEDAPMEE.

The protein belongs to the tubulin family. In terms of assembly, dimer of alpha and beta chains. A typical microtubule is a hollow water-filled tube with an outer diameter of 25 nm and an inner diameter of 15 nM. Alpha-beta heterodimers associate head-to-tail to form protofilaments running lengthwise along the microtubule wall with the beta-tubulin subunit facing the microtubule plus end conferring a structural polarity. Microtubules usually have 13 protofilaments but different protofilament numbers can be found in some organisms and specialized cells. Mg(2+) is required as a cofactor.

It is found in the cytoplasm. It localises to the cytoskeleton. In terms of biological role, tubulin is the major constituent of microtubules, a cylinder consisting of laterally associated linear protofilaments composed of alpha- and beta-tubulin heterodimers. Microtubules grow by the addition of GTP-tubulin dimers to the microtubule end, where a stabilizing cap forms. Below the cap, tubulin dimers are in GDP-bound state, owing to GTPase activity of alpha-tubulin. This Hypocrea rufa (Trichoderma viride) protein is Tubulin beta-1 chain (tub1).